The primary structure comprises 201 residues: Recombination protein RecR (201 aa).

A C4-type zinc finger spans residues 60–75 (CKTCGNIDTQNPCTVC). Residues 83–178 (SIIVVVADVA…KVTRLAHGVP (96 aa)) form the Toprim domain.

Belongs to the RecR family.

May play a role in DNA repair. It seems to be involved in an RecBC-independent recombinational process of DNA repair. It may act with RecF and RecO. This is Recombination protein RecR from Rhodopseudomonas palustris (strain HaA2).